Consider the following 215-residue polypeptide: Oligoribonuclease (215 aa).

The region spanning Leu-5–Leu-170 is the Exonuclease domain. Tyr-127 is a catalytic residue.

The protein belongs to the oligoribonuclease family.

The protein resides in the cytoplasm. 3'-to-5' exoribonuclease specific for small oligoribonucleotides. The polypeptide is Oligoribonuclease (Mycobacterium ulcerans (strain Agy99)).